Consider the following 372-residue polypeptide: MEAQNIFLYLLIVFLSLHFVFTTLKGRLSPANTRRLIRLLHIPIKSPVAAAIFARKDTREFLDSSIKLVNEEDDFGFSFDFKPYMISKAETINRALDEAIPLIEPLNIHKAMRYAILAGGKRVRPILCLAACELVGGEERLAIQAACAVEMIHTMSLIKDDLPCMDNDDLRRGKPTTHKVFGESVAILSGGALLALAFEHLTEADVSSKKMVRAVKELAKSIGTKGLVAGQAKDLSSEGLEQNDVGLEDLEYIHVHKTGSLLEASAVIGAVIGGGTEKEIEKVRNFARCIGLLFQVVDDILDETKSSEELGKTAGKDKVAGKLTYPKVIGVEKSKEFVEKLKRDAREHLQGFDSDKVKPLIALTNFIANRNH.

An N-terminal signal peptide occupies residues M1–T22. Isopentenyl diphosphate contacts are provided by K121, R124, and H153. D160 and D166 together coordinate Mg(2+). Position 171 (R171) interacts with dimethylallyl diphosphate. R172 is a binding site for isopentenyl diphosphate. Residues K257, T258, Q295, K312, and K322 each contribute to the dimethylallyl diphosphate site.

Belongs to the FPP/GGPP synthase family. In terms of assembly, monomer. Mg(2+) serves as cofactor. Faintly expressed in flowers. Expressed in roots and siliques.

It localises to the endoplasmic reticulum. It carries out the reaction isopentenyl diphosphate + dimethylallyl diphosphate = (2E)-geranyl diphosphate + diphosphate. It catalyses the reaction isopentenyl diphosphate + (2E)-geranyl diphosphate = (2E,6E)-farnesyl diphosphate + diphosphate. The enzyme catalyses isopentenyl diphosphate + (2E,6E)-farnesyl diphosphate = (2E,6E,10E)-geranylgeranyl diphosphate + diphosphate. The protein operates within isoprenoid biosynthesis; farnesyl diphosphate biosynthesis; farnesyl diphosphate from geranyl diphosphate and isopentenyl diphosphate: step 1/1. It participates in isoprenoid biosynthesis; geranyl diphosphate biosynthesis; geranyl diphosphate from dimethylallyl diphosphate and isopentenyl diphosphate: step 1/1. Its pathway is isoprenoid biosynthesis; geranylgeranyl diphosphate biosynthesis; geranylgeranyl diphosphate from farnesyl diphosphate and isopentenyl diphosphate: step 1/1. Functionally, catalyzes the trans-addition of the three molecules of isopentenyl diphosphate (IPP) onto dimethylallyl diphosphate (DMAPP) to form geranylgeranyl diphosphate. The polypeptide is Geranylgeranyl pyrophosphate synthase 4 (Arabidopsis thaliana (Mouse-ear cress)).